We begin with the raw amino-acid sequence, 346 residues long: tRNA N6-adenosine threonylcarbamoyltransferase (346 aa).

A divalent metal cation contacts are provided by H117, H121, and Y138. Substrate contacts are provided by residues 138-142 (YVSGG), D170, G185, and N277. D305 is a binding site for a divalent metal cation.

This sequence belongs to the KAE1 / TsaD family. As to quaternary structure, component of the EKC/KEOPS complex composed of at least SPAP27G11.07c/BUD32, cgi121, gon7, pgp2 and SPAC4H3.13/PCC1; the whole complex dimerizes. A divalent metal cation serves as cofactor.

It localises to the cytoplasm. Its subcellular location is the nucleus. The enzyme catalyses L-threonylcarbamoyladenylate + adenosine(37) in tRNA = N(6)-L-threonylcarbamoyladenosine(37) in tRNA + AMP + H(+). In terms of biological role, component of the EKC/KEOPS complex that is required for the formation of a threonylcarbamoyl group on adenosine at position 37 (t(6)A37) in tRNAs that read codons beginning with adenine. The complex is probably involved in the transfer of the threonylcarbamoyl moiety of threonylcarbamoyl-AMP (TC-AMP) to the N6 group of A37. Pgp2 likely plays a direct catalytic role in this reaction, but requires other protein(s) of the complex to fulfill this activity. The EKC/KEOPS complex also promotes both telomere uncapping and telomere elongation. The complex is required for efficient recruitment of transcriptional coactivators. This Schizosaccharomyces pombe (strain 972 / ATCC 24843) (Fission yeast) protein is tRNA N6-adenosine threonylcarbamoyltransferase (pgp2).